The sequence spans 432 residues: Patatin-like phospholipase domain-containing protein 5 (432 aa).

A PNPLA domain is found at 12-181 (LSFSGSGYMG…SNNLPFSDCP (170 aa)). The GXGXXG signature appears at 16–21 (GSGYMG). A GXSXG motif is present at residues 47–51 (GSSSG). Catalysis depends on Ser49, which acts as the Nucleophile. Asp168 serves as the catalytic Proton acceptor. The DGA/G motif lies at 168–170 (DGA). Residues 404–423 (ADSGLLRQQRGTAPSGNRPL) form a disordered region.

It carries out the reaction a triacylglycerol + H2O = a diacylglycerol + a fatty acid + H(+). Functionally, has abundant triacylglycerol lipase activity. This Mus musculus (Mouse) protein is Patatin-like phospholipase domain-containing protein 5.